Here is a 754-residue protein sequence, read N- to C-terminus: Ubiquitin carboxyl-terminal hydrolase 9 (754 aa).

A compositionally biased stretch (basic residues) spans 1 to 14 (MIKRWLSVNRKKSH). Residues 1–76 (MIKRWLSVNR…SKFSSQTDNL (76 aa)) are disordered. The segment covering 42–58 (SIAKSPSAKSSTSSIPS) has biased composition (low complexity). Residues 134-667 (FGYENFGNTC…TAYVLFYKET (534 aa)) form the USP domain. Cysteine 143 acts as the Nucleophile in catalysis. Over residues 194–209 (ETSTNSGNSNTGYQSN) the composition is skewed to polar residues. The interval 194 to 273 (ETSTNSGNSN…DNNEMERPQP (80 aa)) is disordered. Positions 222–233 (QSDQDNSSSSTQ) are enriched in low complexity. A compositionally biased stretch (basic and acidic residues) spans 250–272 (GKDKSNYKDSAKKDDNNEMERPQ). The active-site Proton acceptor is histidine 618. The interval 726–754 (VKTAETKTPLNDKKRNKQKRKSRILSFIK) is disordered. Basic and acidic residues predominate over residues 727-738 (KTAETKTPLNDK). Basic residues predominate over residues 739–748 (KRNKQKRKSR).

The protein belongs to the peptidase C19 family.

It catalyses the reaction Thiol-dependent hydrolysis of ester, thioester, amide, peptide and isopeptide bonds formed by the C-terminal Gly of ubiquitin (a 76-residue protein attached to proteins as an intracellular targeting signal).. The protein is Ubiquitin carboxyl-terminal hydrolase 9 (UBP9) of Saccharomyces cerevisiae (strain ATCC 204508 / S288c) (Baker's yeast).